The following is a 759-amino-acid chain: 1,4-alpha-glucan branching enzyme GlgB (759 aa).

Positions 1–22 (MAKTKGLPKDTAVTPSPHLRPH) are disordered. Asp-422 serves as the catalytic Nucleophile. Glu-475 functions as the Proton donor in the catalytic mechanism.

Belongs to the glycosyl hydrolase 13 family. GlgB subfamily. In terms of assembly, monomer.

The catalysed reaction is Transfers a segment of a (1-&gt;4)-alpha-D-glucan chain to a primary hydroxy group in a similar glucan chain.. Its pathway is glycan biosynthesis; glycogen biosynthesis. Its function is as follows. Catalyzes the formation of the alpha-1,6-glucosidic linkages in glycogen by scission of a 1,4-alpha-linked oligosaccharide from growing alpha-1,4-glucan chains and the subsequent attachment of the oligosaccharide to the alpha-1,6 position. This Mycobacterium sp. (strain KMS) protein is 1,4-alpha-glucan branching enzyme GlgB.